Reading from the N-terminus, the 336-residue chain is Holliday junction branch migration complex subunit RuvB (336 aa).

The tract at residues 4 to 184 (ADRLISADAI…FGIVQRLEFY (181 aa)) is large ATPase domain (RuvB-L). Residues Arg-24, Gly-65, Lys-68, Thr-69, Thr-70, 131-133 (EDY), Arg-174, Tyr-184, and Arg-221 each bind ATP. A Mg(2+)-binding site is contributed by Thr-69. The interval 185–255 (NVADLQYIVG…VATQALDMLA (71 aa)) is small ATPAse domain (RuvB-S). The segment at 258–336 (TEGFDYMDRK…HFGLTREDLG (79 aa)) is head domain (RuvB-H). Residues Arg-294, Arg-313, and Arg-318 each coordinate DNA.

This sequence belongs to the RuvB family. Homohexamer. Forms an RuvA(8)-RuvB(12)-Holliday junction (HJ) complex. HJ DNA is sandwiched between 2 RuvA tetramers; dsDNA enters through RuvA and exits via RuvB. An RuvB hexamer assembles on each DNA strand where it exits the tetramer. Each RuvB hexamer is contacted by two RuvA subunits (via domain III) on 2 adjacent RuvB subunits; this complex drives branch migration. In the full resolvosome a probable DNA-RuvA(4)-RuvB(12)-RuvC(2) complex forms which resolves the HJ.

It is found in the cytoplasm. The enzyme catalyses ATP + H2O = ADP + phosphate + H(+). The RuvA-RuvB-RuvC complex processes Holliday junction (HJ) DNA during genetic recombination and DNA repair, while the RuvA-RuvB complex plays an important role in the rescue of blocked DNA replication forks via replication fork reversal (RFR). RuvA specifically binds to HJ cruciform DNA, conferring on it an open structure. The RuvB hexamer acts as an ATP-dependent pump, pulling dsDNA into and through the RuvAB complex. RuvB forms 2 homohexamers on either side of HJ DNA bound by 1 or 2 RuvA tetramers; 4 subunits per hexamer contact DNA at a time. Coordinated motions by a converter formed by DNA-disengaged RuvB subunits stimulates ATP hydrolysis and nucleotide exchange. Immobilization of the converter enables RuvB to convert the ATP-contained energy into a lever motion, pulling 2 nucleotides of DNA out of the RuvA tetramer per ATP hydrolyzed, thus driving DNA branch migration. The RuvB motors rotate together with the DNA substrate, which together with the progressing nucleotide cycle form the mechanistic basis for DNA recombination by continuous HJ branch migration. Branch migration allows RuvC to scan DNA until it finds its consensus sequence, where it cleaves and resolves cruciform DNA. This is Holliday junction branch migration complex subunit RuvB from Pectobacterium carotovorum subsp. carotovorum (strain PC1).